A 66-amino-acid chain; its full sequence is Large ribosomal subunit protein bL33c (66 aa).

It belongs to the bacterial ribosomal protein bL33 family.

The protein resides in the plastid. The protein localises to the chloroplast. The polypeptide is Large ribosomal subunit protein bL33c (Populus alba (White poplar)).